Reading from the N-terminus, the 130-residue chain is Large ribosomal subunit protein bL19 (130 aa).

The protein belongs to the bacterial ribosomal protein bL19 family.

Its function is as follows. This protein is located at the 30S-50S ribosomal subunit interface and may play a role in the structure and function of the aminoacyl-tRNA binding site. The protein is Large ribosomal subunit protein bL19 of Burkholderia lata (strain ATCC 17760 / DSM 23089 / LMG 22485 / NCIMB 9086 / R18194 / 383).